The following is a 144-amino-acid chain: MKTVELTNGSKKKVEDRIVGRHVYGNLYGVDPAKLWDEEGLKELVREAAEVANMKLVEVRSWKFTGYHGGVSVMALVLESHITIHTWPDYEYATVDVYTCGERSDPWRAFELIVERLEPEDYVVHYSDRSSPKRPLGGTAGRIQ.

Residue S80 is the Schiff-base intermediate with substrate; via pyruvic acid of the active site. S80 carries the post-translational modification Pyruvic acid (Ser); by autocatalysis. H85 (proton acceptor; for processing activity) is an active-site residue. The Proton donor; for catalytic activity role is filled by C100.

The protein belongs to the prokaryotic AdoMetDC family. Type 1 subfamily. Heterooctamer of four alpha and four beta chains arranged as a tetramer of alpha/beta heterodimers. Pyruvate serves as cofactor. Is synthesized initially as an inactive proenzyme. Formation of the active enzyme involves a self-maturation process in which the active site pyruvoyl group is generated from an internal serine residue via an autocatalytic post-translational modification. Two non-identical subunits are generated from the proenzyme in this reaction, and the pyruvate is formed at the N-terminus of the alpha chain, which is derived from the carboxyl end of the proenzyme. The post-translation cleavage follows an unusual pathway, termed non-hydrolytic serinolysis, in which the side chain hydroxyl group of the serine supplies its oxygen atom to form the C-terminus of the beta chain, while the remainder of the serine residue undergoes an oxidative deamination to produce ammonia and the pyruvoyl group blocking the N-terminus of the alpha chain.

The enzyme catalyses L-arginine + H(+) = agmatine + CO2. It participates in amine and polyamine biosynthesis; agmatine biosynthesis; agmatine from L-arginine: step 1/1. In terms of biological role, specifically catalyzes the decarboxylation of L-arginine to agmatine. Has no S-adenosylmethionine decarboxylase (AdoMetDC) activity. In Ignicoccus hospitalis (strain KIN4/I / DSM 18386 / JCM 14125), this protein is Arginine decarboxylase proenzyme.